Here is a 337-residue protein sequence, read N- to C-terminus: Methylthioribose-1-phosphate isomerase (337 aa).

Residues Arg-47–Ala-49, Arg-81, and Gln-184 contribute to the substrate site. Residue Asp-225 is the Proton donor of the active site. Residue Asn-235–Lys-236 participates in substrate binding.

Belongs to the eIF-2B alpha/beta/delta subunits family. MtnA subfamily.

It carries out the reaction 5-(methylsulfanyl)-alpha-D-ribose 1-phosphate = 5-(methylsulfanyl)-D-ribulose 1-phosphate. Its pathway is amino-acid biosynthesis; L-methionine biosynthesis via salvage pathway; L-methionine from S-methyl-5-thio-alpha-D-ribose 1-phosphate: step 1/6. Its function is as follows. Catalyzes the interconversion of methylthioribose-1-phosphate (MTR-1-P) into methylthioribulose-1-phosphate (MTRu-1-P). The chain is Methylthioribose-1-phosphate isomerase from Parasynechococcus marenigrum (strain WH8102).